Consider the following 251-residue polypeptide: 1-(5-phosphoribosyl)-5-[(5-phosphoribosylamino)methylideneamino] imidazole-4-carboxamide isomerase (251 aa).

Aspartate 8 serves as the catalytic Proton acceptor. Catalysis depends on aspartate 129, which acts as the Proton donor.

It belongs to the HisA/HisF family.

The protein resides in the cytoplasm. The catalysed reaction is 1-(5-phospho-beta-D-ribosyl)-5-[(5-phospho-beta-D-ribosylamino)methylideneamino]imidazole-4-carboxamide = 5-[(5-phospho-1-deoxy-D-ribulos-1-ylimino)methylamino]-1-(5-phospho-beta-D-ribosyl)imidazole-4-carboxamide. It participates in amino-acid biosynthesis; L-histidine biosynthesis; L-histidine from 5-phospho-alpha-D-ribose 1-diphosphate: step 4/9. The protein is 1-(5-phosphoribosyl)-5-[(5-phosphoribosylamino)methylideneamino] imidazole-4-carboxamide isomerase of Desulfosudis oleivorans (strain DSM 6200 / JCM 39069 / Hxd3) (Desulfococcus oleovorans).